The sequence spans 256 residues: Capsid protein (256 aa).

Residues 3-20 (KRPADIIISTPGSKVRRR) carry the Bipartite nuclear localization signal motif. The Nuclear localization signal signature appears at 40-54 (KRQSWTNRPINRKPR). The segment at 68 to 85 (CEGPCKVQSFESRHDVVH) is a zinc-finger region. Positions 101 to 122 (LTHRVGKRFCVKSIYILGKIWM) match the Nuclear export signal motif. The short motif at 200–247 (RRFFRVNNYVVYNQQEAGKYENHTENALMLYMACTHASNPVYATLKIR) is the Bipartite nuclear localization signal element.

This sequence belongs to the geminiviridae capsid protein family. Homomultimer. Binds to single-stranded and double-stranded viral DNA. Interacts (via nuclear localization signals) with host importin alpha-1a.

It localises to the virion. Its subcellular location is the host nucleus. Functionally, encapsidates the viral DNA into characteristic twinned ('geminate') particles. Binds the genomic viral ssDNA and shuttles it into and out of the cell nucleus. The CP of bipartite geminiviruses is not required for cell-to-cell or systemic movement. The protein is Capsid protein of Manihot esculenta (Cassava).